The following is a 426-amino-acid chain: Probable imidazolonepropionase (426 aa).

2 residues coordinate 4-imidazolone-5-propanoate: Tyr159 and His192. Tyr159 is a binding site for N-formimidoyl-L-glutamate. His260 contacts Fe(3+). His260 serves as a coordination point for Zn(2+). Glu263 contributes to the 4-imidazolone-5-propanoate binding site. Fe(3+) is bound at residue Asp334. A Zn(2+)-binding site is contributed by Asp334. Residue Asn336 participates in N-formimidoyl-L-glutamate binding.

The protein belongs to the metallo-dependent hydrolases superfamily. HutI family. It depends on Zn(2+) as a cofactor. The cofactor is Fe(3+).

It carries out the reaction 4-imidazolone-5-propanoate + H2O = N-formimidoyl-L-glutamate. It participates in amino-acid degradation; L-histidine degradation into L-glutamate; N-formimidoyl-L-glutamate from L-histidine: step 3/3. This is Probable imidazolonepropionase (AMDHD1) from Homo sapiens (Human).